The following is a 313-amino-acid chain: tRNA-cytidine(32) 2-sulfurtransferase (313 aa).

The short motif at 60-65 (SGGKDS) is the PP-loop motif element. 3 residues coordinate [4Fe-4S] cluster: Cys-135, Cys-138, and Cys-226.

This sequence belongs to the TtcA family. Homodimer. It depends on Mg(2+) as a cofactor. The cofactor is [4Fe-4S] cluster.

The protein localises to the cytoplasm. It catalyses the reaction cytidine(32) in tRNA + S-sulfanyl-L-cysteinyl-[cysteine desulfurase] + AH2 + ATP = 2-thiocytidine(32) in tRNA + L-cysteinyl-[cysteine desulfurase] + A + AMP + diphosphate + H(+). Its pathway is tRNA modification. In terms of biological role, catalyzes the ATP-dependent 2-thiolation of cytidine in position 32 of tRNA, to form 2-thiocytidine (s(2)C32). The sulfur atoms are provided by the cysteine/cysteine desulfurase (IscS) system. The protein is tRNA-cytidine(32) 2-sulfurtransferase of Delftia acidovorans (strain DSM 14801 / SPH-1).